The chain runs to 116 residues: Non-specific lipid-transfer protein AP10 (116 aa).

An N-terminal signal peptide occupies residues 1-26 (MKGTSMGVAILAMIVMAQLMVHPSVA). 4 disulfide bridges follow: cysteine 29-cysteine 76, cysteine 39-cysteine 53, cysteine 54-cysteine 98, and cysteine 74-cysteine 112.

Belongs to the plant LTP family. In terms of tissue distribution, in germinating seeds, detected in the entire surface of the cotyledons, shoot meristem, inter-cotyledon space, primary xylem and immature vascular elements (at protein level). Expressed in seeds, but not the aerial parts of the plant.

The protein resides in the secreted. The protein localises to the extracellular space. It is found in the membrane. In terms of biological role, plant non-specific lipid-transfer proteins transfer phospholipids as well as galactolipids across membranes. May play a role in wax or cutin deposition in the cell walls of expanding epidermal cells and certain secretory tissues. Permeabilizes the membrane of fungal spores, inhibits germination of the spores of the fungus F.solani at a concentration of 40 ug/ml. Inhibits the growth of F.solani with an IC(50) of 6.5 ug/ml, weakly inhibits the growth of the fungus A.alternata. Binds oleoyl-CoA. This is Non-specific lipid-transfer protein AP10 from Helianthus annuus (Common sunflower).